Reading from the N-terminus, the 260-residue chain is Endomucin (260 aa).

A signal peptide spans 1–18 (MELLQVTILFLLPSICSS). 4 N-linked (GlcNAc...) asparagine glycosylation sites follow: N19, N28, N97, and N103. Residues 19–189 (NSTGVLEAAN…TSATSRSYSS (171 aa)) are Extracellular-facing. Polar residues-rich tracts occupy residues 119–133 (QSSKPKTETQSSIKT) and 145–170 (ASPSETGTLSSIPVTIPENTSQSQVI). A disordered region spans residues 119-182 (QSSKPKTETQ…EGGKNASTSA (64 aa)). N163 and N177 each carry an N-linked (GlcNAc...) asparagine glycan. A helical membrane pass occupies residues 190–210 (IILPVVIALIVITLSVFVLVG). Residues 211-260 (LYRMCWKADPGTPENGNDQPQSDKESVKLLTVKTISHESGEHSAQGKTKN) lie on the Cytoplasmic side of the membrane. Phosphoserine is present on S236.

Highly O-glycosylated. Sialic acid-rich glycoprotein.

It is found in the membrane. Endothelial sialomucin, also called endomucin or mucin-like sialoglycoprotein, which interferes with the assembly of focal adhesion complexes and inhibits interaction between cells and the extracellular matrix. In Pongo abelii (Sumatran orangutan), this protein is Endomucin (EMCN).